A 129-amino-acid chain; its full sequence is Glycine cleavage system H protein (129 aa).

A Lipoyl-binding domain is found at 24 to 106 (SYTVGITEHA…YGEGWFFRVM (83 aa)). K65 is modified (N6-lipoyllysine).

It belongs to the GcvH family. As to quaternary structure, the glycine cleavage system is composed of four proteins: P, T, L and H. (R)-lipoate serves as cofactor.

The glycine cleavage system catalyzes the degradation of glycine. The H protein shuttles the methylamine group of glycine from the P protein to the T protein. The chain is Glycine cleavage system H protein from Shewanella baltica (strain OS155 / ATCC BAA-1091).